Consider the following 250-residue polypeptide: MAVTKLVLVRHGESQWNNENRFTGWYDVDLSEKGRSEAKAAGQLLKDEGFAFDFAYTSVLKRAIHTLWSVLDELDQAWLPVEKSWKLNERHYGALQGLNKAETAEKYGDEQVKQWRRGFAITPPELTRDDERFPGHDPRYASLSDKELPQTESLALTIERVVPYWTETILPRIKSGERVIVAAHGNSLRALVKYLDNMGEDEILELNIPTGVPLVYEFDENFKPIKRYYLGNADEIAAKAAAVANQGKAK.

Residues R10–N17, T23–G24, R62, E89–Y92, K100, R116–R117, and G185–N186 contribute to the substrate site. The Tele-phosphohistidine intermediate role is filled by H11. The active-site Proton donor/acceptor is E89.

Belongs to the phosphoglycerate mutase family. BPG-dependent PGAM subfamily. As to quaternary structure, homodimer.

The enzyme catalyses (2R)-2-phosphoglycerate = (2R)-3-phosphoglycerate. Its pathway is carbohydrate degradation; glycolysis; pyruvate from D-glyceraldehyde 3-phosphate: step 3/5. In terms of biological role, catalyzes the interconversion of 2-phosphoglycerate and 3-phosphoglycerate. In Pectobacterium atrosepticum (strain SCRI 1043 / ATCC BAA-672) (Erwinia carotovora subsp. atroseptica), this protein is 2,3-bisphosphoglycerate-dependent phosphoglycerate mutase.